Reading from the N-terminus, the 549-residue chain is Glucose-6-phosphate isomerase (549 aa).

Glutamate 353 (proton donor) is an active-site residue. Residues histidine 384 and lysine 512 contribute to the active site.

Belongs to the GPI family.

The protein resides in the cytoplasm. It catalyses the reaction alpha-D-glucose 6-phosphate = beta-D-fructose 6-phosphate. The protein operates within carbohydrate biosynthesis; gluconeogenesis. It functions in the pathway carbohydrate degradation; glycolysis; D-glyceraldehyde 3-phosphate and glycerone phosphate from D-glucose: step 2/4. In terms of biological role, catalyzes the reversible isomerization of glucose-6-phosphate to fructose-6-phosphate. The protein is Glucose-6-phosphate isomerase of Solidesulfovibrio magneticus (strain ATCC 700980 / DSM 13731 / RS-1) (Desulfovibrio magneticus).